Here is a 149-residue protein sequence, read N- to C-terminus: Transcriptional repressor NrdR (149 aa).

The segment at 3 to 34 (CPFCTAKDTKVIDSRLVGGGHQVRRRRECNDC) is a zinc-finger region. One can recognise an ATP-cone domain in the interval 49 to 139 (PRVIKQDGSR…VYRSFEDIRE (91 aa)).

This sequence belongs to the NrdR family. Zn(2+) serves as cofactor.

Its function is as follows. Negatively regulates transcription of bacterial ribonucleotide reductase nrd genes and operons by binding to NrdR-boxes. The sequence is that of Transcriptional repressor NrdR from Pseudoalteromonas translucida (strain TAC 125).